A 275-amino-acid chain; its full sequence is MAIRLYKAYTPGTRNRTISTFNEITNKKPEKTLIRKNHRRQGRNSRGIITSRHRGKGHKRLYRTIDFKRNKYDIKAKVVSIEYDPNRNARIALLHYSDGEKRYILHPRSLNIGETVISGIKASLEVGNSLPLNYIPLGTAVHNIELNPLKGGQIVRAAGTYAQIVAKEGAFVTLKLPSNEVRLIRKECFATIGQVGNIDASNINIGKAGRNRWLSKRPKVRGVVMNPIDHPHGGGEGRSPIGKPHPVTPWGKPALGRKTRKKPKYSNRYILRKRK.

Disordered regions lie at residues 36-56 and 224-275; these read KNHRRQGRNSRGIITSRHRGK and VMNP…RKRK. Positions 255 to 275 are enriched in basic residues; the sequence is LGRKTRKKPKYSNRYILRKRK.

It belongs to the universal ribosomal protein uL2 family. Part of the 50S ribosomal subunit.

Its subcellular location is the plastid. It is found in the chloroplast. The sequence is that of Large ribosomal subunit protein uL2c (rpl2) from Gracilaria tenuistipitata var. liui (Red alga).